Here is a 432-residue protein sequence, read N- to C-terminus: Ectonucleoside triphosphate diphosphohydrolase 5 (432 aa).

An N-terminal signal peptide occupies residues M1 to R24. The Proton acceptor role is filled by E175. N-linked (GlcNAc...) asparagine glycosylation occurs at N235. Intrachain disulfides connect C275–C307 and C367–C381. N372 is a glycosylation site (N-linked (GlcNAc...) asparagine).

Belongs to the GDA1/CD39 NTPase family. In terms of assembly, monomer; active form. Homodimer; disulfide-linked. Homodimers are enzymatically inactive. It depends on Ca(2+) as a cofactor. Mg(2+) serves as cofactor. In terms of processing, N-glycosylated; high-mannose type.

It is found in the endoplasmic reticulum. Its subcellular location is the secreted. It catalyses the reaction a ribonucleoside 5'-diphosphate + H2O = a ribonucleoside 5'-phosphate + phosphate + H(+). The enzyme catalyses GDP + H2O = GMP + phosphate + H(+). The catalysed reaction is UDP + H2O = UMP + phosphate + H(+). It carries out the reaction IDP + H2O = IMP + phosphate + H(+). It catalyses the reaction CDP + H2O = CMP + phosphate + H(+). The enzyme catalyses ADP + H2O = AMP + phosphate + H(+). The protein operates within protein modification; protein glycosylation. In terms of biological role, hydrolyzes nucleoside diphosphates with a preference for GDP, IDP and UDP compared to ADP and CDP. In the lumen of the endoplasmic reticulum, hydrolyzes UDP that acts as an end-product feedback inhibitor of the UDP-Glc:glycoprotein glucosyltransferases. UMP can be transported back by an UDP-sugar antiporter to the cytosol where it is consumed to regenerate UDP-glucose. Therefore, it positively regulates protein reglucosylation by clearing UDP from the ER lumen and by promoting the regeneration of UDP-glucose. Protein reglucosylation is essential to proper glycoprotein folding and quality control in the ER. This chain is Ectonucleoside triphosphate diphosphohydrolase 5 (ENTPD5), found in Bos taurus (Bovine).